Here is a 303-residue protein sequence, read N- to C-terminus: MAGMSLQHPWAFAFGLLGNIISFMTYLAPLPTFYRIYKSKSTQGFQSVPYVVALFSAMLWIYYALLKSDECLLITINSAGCVIETIYIAVYLVYAPKKAKMFTAKLLLLVNVGVFGLILLLTLLLSAGDRRIVVLGWVCVGFSVSVFVAPLSIIRLVVRTKSVEFMPFSLSFSLTISAVVWFLYGLLIKDKYVALPNVLGFSFGVIQMGLYAMYRNSTPKAVLTKEVEAATATGDDDHSAAGVKEHVVNIAKLSAAVDVVKTREVHPVDVESPPAEAPPQEDDKAAAATAAAVAGAGEKKVAA.

The Extracellular segment spans residues 1–9 (MAGMSLQHP). The chain crosses the membrane as a helical span at residues 10–30 (WAFAFGLLGNIISFMTYLAPL). A MtN3/slv 1 domain is found at 13 to 98 (AFGLLGNIIS…AVYLVYAPKK (86 aa)). At 31 to 44 (PTFYRIYKSKSTQG) the chain is on the cytoplasmic side. The helical transmembrane segment at 45–65 (FQSVPYVVALFSAMLWIYYAL) threads the bilayer. Over 66–72 (LKSDECL) the chain is Extracellular. Residues 73-93 (LITINSAGCVIETIYIAVYLV) traverse the membrane as a helical segment. Over 94–105 (YAPKKAKMFTAK) the chain is Cytoplasmic. The chain crosses the membrane as a helical span at residues 106 to 126 (LLLLVNVGVFGLILLLTLLLS). Topologically, residues 127–133 (AGDRRIV) are extracellular. The chain crosses the membrane as a helical span at residues 134–154 (VLGWVCVGFSVSVFVAPLSII). The MtN3/slv 2 domain occupies 134–217 (VLGWVCVGFS…MGLYAMYRNS (84 aa)). Residues 155 to 167 (RLVVRTKSVEFMP) lie on the Cytoplasmic side of the membrane. The chain crosses the membrane as a helical span at residues 168–188 (FSLSFSLTISAVVWFLYGLLI). The Extracellular portion of the chain corresponds to 189–192 (KDKY). The helical transmembrane segment at 193–213 (VALPNVLGFSFGVIQMGLYAM) threads the bilayer. The Cytoplasmic segment spans residues 214–303 (YRNSTPKAVL…AGAGEKKVAA (90 aa)). The disordered stretch occupies residues 266-290 (HPVDVESPPAEAPPQEDDKAAAATA).

It belongs to the SWEET sugar transporter family. As to quaternary structure, forms homooligomers and/or heterooligomers.

It is found in the cell membrane. Functionally, mediates both low-affinity uptake and efflux of sugar across the plasma membrane. The chain is Bidirectional sugar transporter SWEET14 (SWEET14) from Oryza sativa subsp. indica (Rice).